The following is a 253-amino-acid chain: 1-(5-phosphoribosyl)-5-[(5-phosphoribosylamino)methylideneamino] imidazole-4-carboxamide isomerase (253 aa).

The active-site Proton acceptor is D8. D131 serves as the catalytic Proton donor.

Belongs to the HisA/HisF family.

The protein localises to the cytoplasm. The catalysed reaction is 1-(5-phospho-beta-D-ribosyl)-5-[(5-phospho-beta-D-ribosylamino)methylideneamino]imidazole-4-carboxamide = 5-[(5-phospho-1-deoxy-D-ribulos-1-ylimino)methylamino]-1-(5-phospho-beta-D-ribosyl)imidazole-4-carboxamide. The protein operates within amino-acid biosynthesis; L-histidine biosynthesis; L-histidine from 5-phospho-alpha-D-ribose 1-diphosphate: step 4/9. The chain is 1-(5-phosphoribosyl)-5-[(5-phosphoribosylamino)methylideneamino] imidazole-4-carboxamide isomerase from Polynucleobacter necessarius subsp. necessarius (strain STIR1).